We begin with the raw amino-acid sequence, 79 residues long: Small ribosomal subunit protein bS18 (79 aa).

This sequence belongs to the bacterial ribosomal protein bS18 family. Part of the 30S ribosomal subunit. Forms a tight heterodimer with protein bS6.

Binds as a heterodimer with protein bS6 to the central domain of the 16S rRNA, where it helps stabilize the platform of the 30S subunit. In Bradyrhizobium sp. (strain BTAi1 / ATCC BAA-1182), this protein is Small ribosomal subunit protein bS18.